A 158-amino-acid polypeptide reads, in one-letter code: Transcriptional repressor NrdR (158 aa).

A disordered region spans residues 1–20 (MRCPYCQSEDTQVKDSRPAE). The segment at 3–34 (CPYCQSEDTQVKDSRPAEDGAVIRRRRVCSVC) is a zinc-finger region. Basic and acidic residues predominate over residues 11–20 (TQVKDSRPAE). The region spanning 49 to 139 (LMVVKKSGRR…VYRNFSKAVD (91 aa)) is the ATP-cone domain.

The protein belongs to the NrdR family. The cofactor is Zn(2+).

Functionally, negatively regulates transcription of bacterial ribonucleotide reductase nrd genes and operons by binding to NrdR-boxes. In Brucella anthropi (strain ATCC 49188 / DSM 6882 / CCUG 24695 / JCM 21032 / LMG 3331 / NBRC 15819 / NCTC 12168 / Alc 37) (Ochrobactrum anthropi), this protein is Transcriptional repressor NrdR.